The following is a 514-amino-acid chain: Alpha-amylase (514 aa).

The signal sequence occupies residues 1–31; it reads MIQKRKRTVSFRLVLMCTLLFVSLPITKTSA. Residues N133, D190, A212, D214, D225, D231, D233, and D235 each coordinate Ca(2+). D190 is a binding site for Na(+). Na(+) contacts are provided by D214, D225, and D231. D262 serves as the catalytic Nucleophile. H266 serves as a coordination point for Ca(2+). Catalysis depends on E292, which acts as the Proton donor. Residues G331, D438, and D461 each coordinate Ca(2+).

It belongs to the glycosyl hydrolase 13 family. In terms of assembly, monomer. It depends on Ca(2+) as a cofactor. Requires Na(+) as cofactor.

It is found in the secreted. It carries out the reaction Endohydrolysis of (1-&gt;4)-alpha-D-glucosidic linkages in polysaccharides containing three or more (1-&gt;4)-alpha-linked D-glucose units.. This is Alpha-amylase from Bacillus amyloliquefaciens (Bacillus velezensis).